A 201-amino-acid polypeptide reads, in one-letter code: Small ribosomal subunit protein uS4c (201 aa).

The interval 19-38 (PGLTSKSPKAGSDLRNQLRS) is disordered. Residues 89–149 (MRLDNILFRL…DEQKSRALIQ (61 aa)) form the S4 RNA-binding domain.

The protein belongs to the universal ribosomal protein uS4 family. In terms of assembly, part of the 30S ribosomal subunit. Contacts protein S5. The interaction surface between S4 and S5 is involved in control of translational fidelity.

It localises to the plastid. Its subcellular location is the chloroplast. Its function is as follows. One of the primary rRNA binding proteins, it binds directly to 16S rRNA where it nucleates assembly of the body of the 30S subunit. Functionally, with S5 and S12 plays an important role in translational accuracy. This is Small ribosomal subunit protein uS4c (rps4) from Platanus occidentalis (Sycamore).